A 294-amino-acid polypeptide reads, in one-letter code: Bifunctional protein FolD (294 aa).

NADP(+) is bound by residues 166-168, S191, and I232; that span reads GRS.

Belongs to the tetrahydrofolate dehydrogenase/cyclohydrolase family. In terms of assembly, homodimer.

The enzyme catalyses (6R)-5,10-methylene-5,6,7,8-tetrahydrofolate + NADP(+) = (6R)-5,10-methenyltetrahydrofolate + NADPH. It carries out the reaction (6R)-5,10-methenyltetrahydrofolate + H2O = (6R)-10-formyltetrahydrofolate + H(+). Its pathway is one-carbon metabolism; tetrahydrofolate interconversion. Functionally, catalyzes the oxidation of 5,10-methylenetetrahydrofolate to 5,10-methenyltetrahydrofolate and then the hydrolysis of 5,10-methenyltetrahydrofolate to 10-formyltetrahydrofolate. The protein is Bifunctional protein FolD of Afipia carboxidovorans (strain ATCC 49405 / DSM 1227 / KCTC 32145 / OM5) (Oligotropha carboxidovorans).